The primary structure comprises 1921 residues: Endoribonuclease Dicer (1921 aa).

The region spanning 51–227 (LLEAALDHNT…ELEEKIKKLE (177 aa)) is the Helicase ATP-binding domain. ATP is bound at residue 64-71 (LNTGSGKT). A DECH box motif is present at residues 175–178 (DECH). The disordered stretch occupies residues 409 to 433 (YVSWSDSEDDDEDEEIEEKEKPETN). Positions 414-425 (DSEDDDEDEEIE) are enriched in acidic residues. Positions 433–602 (NFPSPFTNIL…SVDTSETETE (170 aa)) constitute a Helicase C-terminal domain. The region spanning 630-722 (AIGHINRYCA…MPVGKETVKY (93 aa)) is the Dicer dsRNA-binding fold domain. The interval 727-746 (DLHDEEETSVPGRPGSTKRR) is disordered. In terms of domain architecture, PAZ spans 895–1042 (KFMEDIEKSE…LVPELCAIHP (148 aa)). The segment at 1270–1289 (NLSKDKVDSEKNTSSGYSSK) is disordered. 2 RNase III domains span residues 1277–1404 (DSEK…EETT) and 1665–1823 (FENF…MDSG). The Mg(2+) site is built by Glu1317, Asp1396, Glu1399, and Glu1704. Residues 1782 to 1801 (QGMDSELRRSEEDEEKEEDI) form a disordered region. Mg(2+) contacts are provided by Asp1809 and Glu1812. Residues 1848 to 1913 (VPRSPVRELL…ARRALRSLKA (66 aa)) enclose the DRBM domain.

The protein belongs to the helicase family. Dicer subfamily. As to quaternary structure, component of the RISC loading complex (RLC), or micro-RNA (miRNA) loading complex (miRLC), which is composed of DICER1, AGO2 and TARBP2; DICER1 and TARBP2 are required to process precursor miRNAs (pre-miRNAs) to mature miRNAs and then load them onto AGO2. Note that the trimeric RLC/miRLC is also referred to as RISC. The cofactor is Mg(2+). Mn(2+) is required as a cofactor.

It is found in the cytoplasm. It carries out the reaction Endonucleolytic cleavage to 5'-phosphomonoester.. In terms of biological role, double-stranded RNA (dsRNA) endoribonuclease playing a central role in short dsRNA-mediated post-transcriptional gene silencing. Cleaves naturally occurring long dsRNAs and short hairpin pre-microRNAs (miRNA) into fragments of twenty-one to twenty-three nucleotides with 3' overhang of two nucleotides, producing respectively short interfering RNAs (siRNA) and mature microRNAs. SiRNAs and miRNAs serve as guide to direct the RNA-induced silencing complex (RISC) to complementary RNAs to degrade them or prevent their translation. Gene silencing mediated by siRNAs, also called RNA interference, controls the elimination of transcripts from mobile and repetitive DNA elements of the genome but also the degradation of exogenous RNA of viral origin for instance. The miRNA pathway on the other side is a mean to specifically regulate the expression of target genes. This is Endoribonuclease Dicer (DICER1) from Gallus gallus (Chicken).